The sequence spans 266 residues: 2-dehydro-3-deoxy-D-gluconate/2-dehydro-3-deoxy-phosphogluconate aldolase (266 aa).

Residues 36-37, 123-125, and 151-153 each bind substrate; these read ST, YNI, and KDS. Lys-151 functions as the Schiff-base intermediate with substrate in the catalytic mechanism.

It belongs to the DapA family. KDPG aldolase subfamily. Homotetramer; dimer of dimers.

The catalysed reaction is 2-dehydro-3-deoxy-6-phospho-D-gluconate = D-glyceraldehyde 3-phosphate + pyruvate. It carries out the reaction 2-dehydro-3-deoxy-D-gluconate = D-glyceraldehyde + pyruvate. The enzyme catalyses 2-dehydro-3-deoxy-6-phospho-D-galactonate = D-glyceraldehyde 3-phosphate + pyruvate. It catalyses the reaction 2-dehydro-3-deoxy-D-galactonate = D-glyceraldehyde + pyruvate. It functions in the pathway carbohydrate acid metabolism; 2-dehydro-3-deoxy-D-gluconate degradation; D-glyceraldehyde 3-phosphate and pyruvate from 2-dehydro-3-deoxy-D-gluconate: step 2/2. Involved in the degradation of glucose via the Entner-Doudoroff pathway. Catalyzes the reversible cleavage of 2-keto-3-deoxy-6-phosphogluconate (KDPG) and 2-keto-3-deoxygluconate (KDG) forming pyruvate and glyceraldehyde 3-phosphate or glyceraldehyde, respectively. It is also able to catalyze the reversible cleavage of 2-keto-3-deoxy-6-phosphogalactonate (KDPGal) and 2-keto-3-deoxygalactonate (KDGal). It is equally active with both D- and L-glyceraldehyde. The sequence is that of 2-dehydro-3-deoxy-D-gluconate/2-dehydro-3-deoxy-phosphogluconate aldolase from Picrophilus torridus (strain ATCC 700027 / DSM 9790 / JCM 10055 / NBRC 100828 / KAW 2/3).